A 95-amino-acid chain; its full sequence is Integration host factor subunit alpha (95 aa).

The tract at residues 51–71 (NFDLRDKNERPGRNPKTGEDI) is disordered. Residues 53 to 69 (DLRDKNERPGRNPKTGE) are compositionally biased toward basic and acidic residues.

The protein belongs to the bacterial histone-like protein family. In terms of assembly, heterodimer of an alpha and a beta chain.

Its function is as follows. This protein is one of the two subunits of integration host factor, a specific DNA-binding protein that functions in genetic recombination as well as in transcriptional and translational control. This chain is Integration host factor subunit alpha, found in Vibrio vulnificus (strain CMCP6).